We begin with the raw amino-acid sequence, 347 residues long: Geranylgeranyl pyrophosphate synthase 7, chloroplastic (347 aa).

The transit peptide at 1-39 (MTTLNLSIFPSVKISSSASIPGFIKIQPFLLRRKLSTVL) directs the protein to the chloroplast. Isopentenyl diphosphate-binding residues include lysine 95, arginine 98, and histidine 127. Residues aspartate 134 and aspartate 140 each coordinate Mg(2+). Arginine 145 serves as a coordination point for dimethylallyl diphosphate. Isopentenyl diphosphate is bound at residue arginine 146. Dimethylallyl diphosphate-binding residues include lysine 232, threonine 233, glutamine 270, lysine 287, and lysine 297.

Belongs to the FPP/GGPP synthase family. In terms of assembly, monomer. It depends on Mg(2+) as a cofactor.

The protein resides in the plastid. It localises to the chloroplast. The enzyme catalyses isopentenyl diphosphate + dimethylallyl diphosphate = (2E)-geranyl diphosphate + diphosphate. The catalysed reaction is isopentenyl diphosphate + (2E)-geranyl diphosphate = (2E,6E)-farnesyl diphosphate + diphosphate. It catalyses the reaction isopentenyl diphosphate + (2E,6E)-farnesyl diphosphate = (2E,6E,10E)-geranylgeranyl diphosphate + diphosphate. The protein operates within isoprenoid biosynthesis; farnesyl diphosphate biosynthesis; farnesyl diphosphate from geranyl diphosphate and isopentenyl diphosphate: step 1/1. It participates in isoprenoid biosynthesis; geranyl diphosphate biosynthesis; geranyl diphosphate from dimethylallyl diphosphate and isopentenyl diphosphate: step 1/1. It functions in the pathway isoprenoid biosynthesis; geranylgeranyl diphosphate biosynthesis; geranylgeranyl diphosphate from farnesyl diphosphate and isopentenyl diphosphate: step 1/1. In terms of biological role, catalyzes the trans-addition of the three molecules of IPP onto DMAPP to form geranylgeranyl pyrophosphate. The polypeptide is Geranylgeranyl pyrophosphate synthase 7, chloroplastic (Arabidopsis thaliana (Mouse-ear cress)).